We begin with the raw amino-acid sequence, 710 residues long: WD repeat-containing protein CG11141 (710 aa).

WD repeat units follow at residues 31-70 (FFPA…MQKL) and 133-172 (LHKC…HLSK). The segment at 283 to 307 (LNPKQRSEPSGTHHTSASTSSTRHS) is disordered. Residues 292 to 307 (SGTHHTSASTSSTRHS) are compositionally biased toward low complexity. Thr488 carries the post-translational modification Phosphothreonine. Ser553 carries the phosphoserine modification. 2 disordered regions span residues 612-635 (ASIQ…GEPV) and 685-710 (DPLA…FLDN). Composition is skewed to polar residues over residues 613–624 (SIQTSSRENATN) and 694–704 (PATSDSNTSSE).

It belongs to the WD repeat KIAA0329 family.

In Drosophila melanogaster (Fruit fly), this protein is WD repeat-containing protein CG11141.